The primary structure comprises 455 residues: Kynurenine 3-monooxygenase (455 aa).

This sequence belongs to the aromatic-ring hydroxylase family. KMO subfamily. It depends on FAD as a cofactor.

It catalyses the reaction L-kynurenine + NADPH + O2 + H(+) = 3-hydroxy-L-kynurenine + NADP(+) + H2O. It participates in cofactor biosynthesis; NAD(+) biosynthesis; quinolinate from L-kynurenine: step 1/3. In terms of biological role, catalyzes the hydroxylation of L-kynurenine (L-Kyn) to form 3-hydroxy-L-kynurenine (L-3OHKyn). Required for synthesis of quinolinic acid. In Xanthomonas oryzae pv. oryzae (strain PXO99A), this protein is Kynurenine 3-monooxygenase.